Consider the following 451-residue polypeptide: Probable D-serine dehydratase (451 aa).

The disordered stretch occupies residues 1–55 (MPGRTRPSCRLAITFTPRPDSATPRAGRAAPATGRRSNRSRSTLSATASPMPRRP). A compositionally biased stretch (low complexity) spans 22–35 (ATPRAGRAAPATGR). An N6-(pyridoxal phosphate)lysine modification is found at Lys118.

It belongs to the serine/threonine dehydratase family. DsdA subfamily. Pyridoxal 5'-phosphate is required as a cofactor.

The catalysed reaction is D-serine = pyruvate + NH4(+). In Paracidovorax citrulli (strain AAC00-1) (Acidovorax citrulli), this protein is Probable D-serine dehydratase.